The chain runs to 230 residues: Aquaporin Z (230 aa).

2 consecutive transmembrane segments (helical) span residues 9-29 (AELI…VLAA) and 35-55 (IGVL…AFAI). The NPA 1 signature appears at 64–66 (NPA). Helical transmembrane passes span 83 to 103 (LPYV…IYLI), 131 to 151 (LGAG…VIMG), and 160 to 180 (GFAP…SIPV). The NPA 2 motif lies at 186–188 (NPA). A helical membrane pass occupies residues 194-214 (ALFVGGWALQQLWLFWVAPLI).

This sequence belongs to the MIP/aquaporin (TC 1.A.8) family. In terms of assembly, homotetramer.

It localises to the cell inner membrane. It catalyses the reaction H2O(in) = H2O(out). Channel that permits osmotically driven movement of water in both directions. It is involved in the osmoregulation and in the maintenance of cell turgor during volume expansion in rapidly growing cells. It mediates rapid entry or exit of water in response to abrupt changes in osmolarity. The polypeptide is Aquaporin Z (Pseudomonas putida (strain ATCC 47054 / DSM 6125 / CFBP 8728 / NCIMB 11950 / KT2440)).